The following is a 717-amino-acid chain: SAGA factor-like TAF6 (717 aa).

Residues 123–204 (KSYAGFDPRS…VPPMLGAMDS (82 aa)) form a sufficient for interaction with Taf9 region.

It belongs to the TAF6 family. As to quaternary structure, component of the Spt-Ada-Gcn5 acetyltransferase (SAGA) complex consisting of wda/Taf5L, Saf6, Taf9, Taf10b, Taf12, Ada1, Spt3, Spt7, Spt20, Sf3b3, Sf3b5, Nipped-A/Tra1, a histone acetyltransferase (HAT) module made up of Gcn5, Ada2b (Isoform B), Ada3 and Sgf29, and a deubiquitinase (DUB) module made up of not/nonstop, Sgf11 and e(y)2 tethered to SAGA by Atxn7; not essential for SAGA complex assembly, histone-modifying activity or chromosomal recruitment. Interacts (via N-terminal histone-fold domain) with Taf9 (via N-terminal histone-fold domain); the interaction is probably direct. Probably forms a histone-like heterooctamer structure with Taf9, Taf12 and Taf10b.

It is found in the nucleus. The protein localises to the chromosome. Its function is as follows. Component of the transcription regulatory complex SAGA, a multiprotein complex that activates transcription by remodeling chromatin and mediating histone acetylation and deubiquitination. The SAGA complex predominantly acetylates histone H3. Involved in SAGA complex coactivator function but not essential for SAGA complex assembly, histone-modifying activity or chromosomal recruitment. Required for oogenesis; involved in transcriptional activation. The sequence is that of SAGA factor-like TAF6 from Drosophila melanogaster (Fruit fly).